A 442-amino-acid chain; its full sequence is RNA-binding protein 34 (442 aa).

Disordered stretches follow at residues 1–26 and 60–157; these read MALGGEERKRRKGSERRQSSGDGVSC and TAEP…VADG. Positions 112 to 122 are enriched in basic and acidic residues; the sequence is KLSDADKRLAN. Lys153 carries the post-translational modification N6-acetyllysine. 2 RRM domains span residues 189-284 and 291-368; these read RTVF…LASE and RSVF…RSVN. A Glycyl lysine isopeptide (Lys-Gly) (interchain with G-Cter in SUMO2) cross-link involves residue Lys246. Ser292 carries the post-translational modification Phosphoserine. Residues 418 to 442 are disordered; that stretch reads KAVLMKKKKKGQKKKVQMKKPRKQQ. Positions 421–442 are enriched in basic residues; sequence LMKKKKKGQKKKVQMKKPRKQQ.

The protein belongs to the RRM RBM34 family.

Its subcellular location is the nucleus. It localises to the nucleolus. The chain is RNA-binding protein 34 (Rbm34) from Mus musculus (Mouse).